The sequence spans 284 residues: Tropomyosin, smooth muscle/fibroblast CTM1 (284 aa).

A coiled-coil region spans residues 1-284 (MEAIKKKMTM…DVTLQGIGDL (284 aa)). Residues 18 to 38 (AIDRAEQAETDKKSAEDKATG) form a disordered region.

This sequence belongs to the tropomyosin family. As to quaternary structure, homodimer. In terms of tissue distribution, predominantly expressed in body wall muscle and heart, low in intestine, ovary and larval tail muscle.

In terms of biological role, the function of tropomyosin in smooth muscle and non-muscle cells is not clear. This chain is Tropomyosin, smooth muscle/fibroblast CTM1 (CTM1), found in Ciona intestinalis (Transparent sea squirt).